Here is a 255-residue protein sequence, read N- to C-terminus: MNINKIALIYNHNSKHLAIIEEIKKLYNYCKIEEAEVIIVIGGDGELLHNIHRYMHLNIPFYGVNLGNLGFLMNPLDTKKLLQNIHESTVSILNPLLMQVEDTSGQIYTALAINEVSIFRKTNQAAKFRIEVNGIERMSELVADGALVATPAGSSAYNLSASGPILPLESNMLCLTPICSFRPRRWHGALLLSSATIKFEILNTNKRPVNATADFQEFNNITNVTVKSTKDKPVKLLFNKNHTLEDRIIKEQFGG.

The active-site Proton acceptor is D44. Residues 44-45 (DG), H49, 114-115 (NE), D144, A152, 155-160 (SAYNLS), and Q216 contribute to the NAD(+) site.

This sequence belongs to the NAD kinase family. A divalent metal cation is required as a cofactor.

The protein localises to the cytoplasm. The catalysed reaction is NAD(+) + ATP = ADP + NADP(+) + H(+). Involved in the regulation of the intracellular balance of NAD and NADP, and is a key enzyme in the biosynthesis of NADP. Catalyzes specifically the phosphorylation on 2'-hydroxyl of the adenosine moiety of NAD to yield NADP. This Rickettsia peacockii (strain Rustic) protein is NAD kinase.